The sequence spans 152 residues: B3 domain-containing protein At1g10455 (152 aa).

The TF-B3 DNA-binding region spans 24–131 (LKKKLSDSDL…EVKFKHFKSQ (108 aa)).

It localises to the nucleus. This Arabidopsis thaliana (Mouse-ear cress) protein is B3 domain-containing protein At1g10455.